We begin with the raw amino-acid sequence, 369 residues long: 2-aminoethylphosphonate--pyruvate transaminase 1 (369 aa).

An N6-(pyridoxal phosphate)lysine modification is found at lysine 191.

Belongs to the class-V pyridoxal-phosphate-dependent aminotransferase family. PhnW subfamily. In terms of assembly, homodimer. Pyridoxal 5'-phosphate is required as a cofactor.

It carries out the reaction (2-aminoethyl)phosphonate + pyruvate = phosphonoacetaldehyde + L-alanine. Functionally, involved in phosphonate degradation. This is 2-aminoethylphosphonate--pyruvate transaminase 1 from Burkholderia lata (strain ATCC 17760 / DSM 23089 / LMG 22485 / NCIMB 9086 / R18194 / 383).